Reading from the N-terminus, the 170-residue chain is Adenine phosphoribosyltransferase (170 aa).

This sequence belongs to the purine/pyrimidine phosphoribosyltransferase family. As to quaternary structure, homodimer.

The protein resides in the cytoplasm. It catalyses the reaction AMP + diphosphate = 5-phospho-alpha-D-ribose 1-diphosphate + adenine. It functions in the pathway purine metabolism; AMP biosynthesis via salvage pathway; AMP from adenine: step 1/1. In terms of biological role, catalyzes a salvage reaction resulting in the formation of AMP, that is energically less costly than de novo synthesis. This chain is Adenine phosphoribosyltransferase, found in Thermosipho africanus (strain TCF52B).